Here is a 68-residue protein sequence, read N- to C-terminus: Large ribosomal subunit protein uL29 (68 aa).

This sequence belongs to the universal ribosomal protein uL29 family.

The sequence is that of Large ribosomal subunit protein uL29 (rpl29) from Pyrococcus abyssi (strain GE5 / Orsay).